Consider the following 170-residue polypeptide: Protein SprT (170 aa).

Positions 22 to 163 constitute a SprT-like domain; the sequence is LQQANLTLQT…RCRRCGKTLR (142 aa). His78 provides a ligand contact to Zn(2+). Glu79 is a catalytic residue. Zn(2+) is bound at residue His82.

It belongs to the SprT family. It depends on Zn(2+) as a cofactor.

The protein localises to the cytoplasm. This chain is Protein SprT, found in Pectobacterium atrosepticum (strain SCRI 1043 / ATCC BAA-672) (Erwinia carotovora subsp. atroseptica).